A 199-amino-acid chain; its full sequence is Recombination protein RecR (199 aa).

The segment at 58–73 adopts a C4-type zinc-finger fold; sequence CRRCFNLTEGEECDIC. Residues 81 to 176 enclose the Toprim domain; sequence SVICVVEDPY…RVTALASGLP (96 aa).

This sequence belongs to the RecR family.

Functionally, may play a role in DNA repair. It seems to be involved in an RecBC-independent recombinational process of DNA repair. It may act with RecF and RecO. In Rubrobacter xylanophilus (strain DSM 9941 / JCM 11954 / NBRC 16129 / PRD-1), this protein is Recombination protein RecR.